We begin with the raw amino-acid sequence, 468 residues long: Purple acid phosphatase 10 (468 aa).

Positions 1-25 (MGRVRKSDFGSIVLVLCCVLNSLLC) are cleaved as a signal peptide. N95 and N113 each carry an N-linked (GlcNAc...) asparagine glycan. D167 lines the Fe cation pocket. The N-linked (GlcNAc...) asparagine glycan is linked to N175. D196 and Y199 together coordinate Fe cation. D196 is a binding site for Zn(2+). Residue N233 coordinates Zn(2+). N233 provides a ligand contact to substrate. N-linked (GlcNAc...) asparagine glycosylation occurs at N306. H318 lines the Zn(2+) pocket. Residue H328 is the Proton donor of the active site. Residue H355 coordinates Zn(2+). 355–357 (HVH) contributes to the substrate binding site. H357 is a binding site for Fe cation. N-linked (GlcNAc...) asparagine glycosylation occurs at N428.

This sequence belongs to the metallophosphoesterase superfamily. Purple acid phosphatase family. As to quaternary structure, homodimer; disulfide-linked. Fe cation serves as cofactor. The cofactor is Zn(2+). Expressed in roots, stems, leaves, flowers and siliques.

Its subcellular location is the secreted. It is found in the cytoplasm. It carries out the reaction a phosphate monoester + H2O = an alcohol + phosphate. In Arabidopsis thaliana (Mouse-ear cress), this protein is Purple acid phosphatase 10 (PAP10).